We begin with the raw amino-acid sequence, 245 residues long: Endogenous retrovirus group K member 5 Env polyprotein (245 aa).

Residues 1 to 245 (MVTPVTWMDN…TLEFGLEIKL (245 aa)) are truncated surface protein.

The protein belongs to the beta type-B retroviral envelope protein family. HERV class-II K(HML-2) env subfamily. In terms of tissue distribution, expressed in lung, placenta, testis, peripheral blood lymphocytes, and teratocarcinoma cell lines.

It is found in the virion. In terms of biological role, retroviral envelope proteins mediate receptor recognition and membrane fusion during early infection. Endogenous envelope proteins may have kept, lost or modified their original function during evolution. This chain is Endogenous retrovirus group K member 5 Env polyprotein (ERVK-5), found in Homo sapiens (Human).